Here is a 199-residue protein sequence, read N- to C-terminus: Chaperone protein TorD (199 aa).

Belongs to the TorD/DmsD family. TorD subfamily.

The protein resides in the cytoplasm. Involved in the biogenesis of TorA. Acts on TorA before the insertion of the molybdenum cofactor and, as a result, probably favors a conformation of the apoenzyme that is competent for acquiring the cofactor. This chain is Chaperone protein TorD, found in Shigella dysenteriae serotype 1 (strain Sd197).